The following is a 363-amino-acid chain: 3-dehydroquinate synthase (363 aa).

NAD(+) contacts are provided by residues 72 to 77 (SGEKEK), 130 to 131 (TT), K142, and K151. The Zn(2+) site is built by E184, H247, and H264.

Belongs to the sugar phosphate cyclases superfamily. Dehydroquinate synthase family. Requires Co(2+) as cofactor. It depends on Zn(2+) as a cofactor. NAD(+) serves as cofactor.

Its subcellular location is the cytoplasm. It catalyses the reaction 7-phospho-2-dehydro-3-deoxy-D-arabino-heptonate = 3-dehydroquinate + phosphate. It participates in metabolic intermediate biosynthesis; chorismate biosynthesis; chorismate from D-erythrose 4-phosphate and phosphoenolpyruvate: step 2/7. Functionally, catalyzes the conversion of 3-deoxy-D-arabino-heptulosonate 7-phosphate (DAHP) to dehydroquinate (DHQ). This is 3-dehydroquinate synthase from Bacillus thuringiensis subsp. konkukian (strain 97-27).